A 102-amino-acid chain; its full sequence is Large ribosomal subunit protein bL21 (102 aa).

It belongs to the bacterial ribosomal protein bL21 family. As to quaternary structure, part of the 50S ribosomal subunit. Contacts protein L20.

Functionally, this protein binds to 23S rRNA in the presence of protein L20. The polypeptide is Large ribosomal subunit protein bL21 (Agathobacter rectalis (strain ATCC 33656 / DSM 3377 / JCM 17463 / KCTC 5835 / VPI 0990) (Eubacterium rectale)).